The following is a 366-amino-acid chain: tRNA/tmRNA (uracil-C(5))-methyltransferase (366 aa).

Positions 190, 218, 223, 239, and 299 each coordinate S-adenosyl-L-methionine. Cysteine 324 acts as the Nucleophile in catalysis. Glutamate 358 functions as the Proton acceptor in the catalytic mechanism.

The protein belongs to the class I-like SAM-binding methyltransferase superfamily. RNA M5U methyltransferase family. TrmA subfamily.

It catalyses the reaction uridine(54) in tRNA + S-adenosyl-L-methionine = 5-methyluridine(54) in tRNA + S-adenosyl-L-homocysteine + H(+). The catalysed reaction is uridine(341) in tmRNA + S-adenosyl-L-methionine = 5-methyluridine(341) in tmRNA + S-adenosyl-L-homocysteine + H(+). Dual-specificity methyltransferase that catalyzes the formation of 5-methyluridine at position 54 (m5U54) in all tRNAs, and that of position 341 (m5U341) in tmRNA (transfer-mRNA). This chain is tRNA/tmRNA (uracil-C(5))-methyltransferase, found in Cronobacter sakazakii (strain ATCC BAA-894) (Enterobacter sakazakii).